The following is a 115-amino-acid chain: T cell receptor beta variable 18 (115 aa).

The signal sequence occupies residues 1–21; sequence MDTRLLCCAVICLLGAGLSNA. An Ig-like domain is found at 22-115; the sequence is GVMQNPRHLV…SAAYFCASSP (94 aa). Residues cysteine 42 and cysteine 111 are joined by a disulfide bond.

In terms of assembly, alpha-beta TR is a heterodimer composed of an alpha and beta chain; disulfide-linked. The alpha-beta TR is associated with the transmembrane signaling CD3 coreceptor proteins to form the TR-CD3 (TcR or TCR). The assembly of alpha-beta TR heterodimers with CD3 occurs in the endoplasmic reticulum where a single alpha-beta TR heterodimer associates with one CD3D-CD3E heterodimer, one CD3G-CD3E heterodimer and one CD247 homodimer forming a stable octameric structure. CD3D-CD3E and CD3G-CD3E heterodimers preferentially associate with TR alpha and TR beta chains, respectively. The association of the CD247 homodimer is the last step of TcR assembly in the endoplasmic reticulum and is required for transport to the cell surface.

It is found in the cell membrane. In terms of biological role, v region of the variable domain of T cell receptor (TR) beta chain that participates in the antigen recognition. Alpha-beta T cell receptors are antigen specific receptors which are essential to the immune response and are present on the cell surface of T lymphocytes. Recognize peptide-major histocompatibility (MH) (pMH) complexes that are displayed by antigen presenting cells (APC), a prerequisite for efficient T cell adaptive immunity against pathogens. Binding of alpha-beta TR to pMH complex initiates TR-CD3 clustering on the cell surface and intracellular activation of LCK that phosphorylates the ITAM motifs of CD3G, CD3D, CD3E and CD247 enabling the recruitment of ZAP70. In turn ZAP70 phosphorylates LAT, which recruits numerous signaling molecules to form the LAT signalosome. The LAT signalosome propagates signal branching to three major signaling pathways, the calcium, the mitogen-activated protein kinase (MAPK) kinase and the nuclear factor NF-kappa-B (NF-kB) pathways, leading to the mobilization of transcription factors that are critical for gene expression and essential for T cell growth and differentiation. The T cell repertoire is generated in the thymus, by V-(D)-J rearrangement. This repertoire is then shaped by intrathymic selection events to generate a peripheral T cell pool of self-MH restricted, non-autoaggressive T cells. Post-thymic interaction of alpha-beta TR with the pMH complexes shapes TR structural and functional avidity. The protein is T cell receptor beta variable 18 of Homo sapiens (Human).